The sequence spans 183 residues: Ribosome rescue factor SmrB (183 aa).

The region spanning Leu98–Glu173 is the Smr domain.

The protein belongs to the SmrB family. As to quaternary structure, associates with collided ribosomes, but not with correctly translating polysomes.

Functionally, acts as a ribosome collision sensor. Detects stalled/collided disomes (pairs of ribosomes where the leading ribosome is stalled and a second ribosome has collided with it) and endonucleolytically cleaves mRNA at the 5' boundary of the stalled ribosome. Stalled/collided disomes form a new interface (primarily via the 30S subunits) that binds SmrB. Cleaved mRNA becomes available for tmRNA ligation, leading to ribosomal subunit dissociation and rescue of stalled ribosomes. This chain is Ribosome rescue factor SmrB, found in Shigella sonnei (strain Ss046).